Consider the following 329-residue polypeptide: Isopenicillin N synthase (329 aa).

Positions 87, 91, and 189 each coordinate isopenicillin N. Arg87, Tyr91, Tyr189, His212, and Asp214 together coordinate N-[(5S)-5-amino-5-carboxypentanoyl]-L-cysteinyl-D-valine. Residues 180-286 enclose the Fe2OG dioxygenase domain; sequence TLSAVTLIHY…RLSLPFFLHA (107 aa). Fe(2+)-binding residues include His212, Asp214, and His268. Arg277 is a 2-oxoglutarate binding site. Residue Ser279 coordinates isopenicillin N. Position 279 (Ser279) interacts with N-[(5S)-5-amino-5-carboxypentanoyl]-L-cysteinyl-D-valine.

Belongs to the iron/ascorbate-dependent oxidoreductase family. Fe cation serves as cofactor. L-ascorbate is required as a cofactor.

It carries out the reaction N-[(5S)-5-amino-5-carboxypentanoyl]-L-cysteinyl-D-valine + O2 = isopenicillin N + 2 H2O. It participates in antibiotic biosynthesis; penicillin G biosynthesis; penicillin G from L-alpha-aminoadipate and L-cysteine and L-valine: step 2/3. In terms of biological role, removes, in the presence of oxygen, 4 hydrogen atoms from delta-L-(alpha-aminoadipyl)-L-cysteinyl-D-valine (ACV) to form the azetidinone and thiazolidine rings of isopenicillin. The chain is Isopenicillin N synthase (pcbC) from Streptomyces griseus.